The following is a 176-amino-acid chain: Epididymal-specific lipocalin-9 (176 aa).

Residues 1-15 (MALLLLSLGLSLIAA) form the signal peptide. N-linked (GlcNAc...) asparagine glycans are attached at residues N68 and N129. C83 and C161 are disulfide-bonded.

The protein belongs to the calycin superfamily. Lipocalin family.

The protein resides in the secreted. The polypeptide is Epididymal-specific lipocalin-9 (Homo sapiens (Human)).